Here is a 178-residue protein sequence, read N- to C-terminus: C-phycoerythrin class 2 subunit beta (178 aa).

Phycourobilin is bound by residues cysteine 50 and cysteine 61. Cysteine 82 and cysteine 159 together coordinate (2R,3E)-phycoerythrobilin.

Belongs to the phycobiliprotein family. Heterodimer of an alpha and a beta chain. Contains two covalently linked phycoerythrobilin chromophores and one covalently linked phycourobilin chromophore.

The protein localises to the cellular thylakoid membrane. In terms of biological role, light-harvesting photosynthetic bile pigment-protein from the phycobiliprotein complex. The polypeptide is C-phycoerythrin class 2 subunit beta (mpeB) (Synechococcus sp. (strain WH8020)).